The primary structure comprises 443 residues: MMEESGIETTPPGTPPLHPAGLAAVPSTEAHSAATSSFSSPNVSGMESLPPHVYSTPQPSLPPVQPSAPPPFVSMSPAPSVPLSGTSVPPSVSPSPATAFSGPPMSHFPPATSASGALLSAPPSGPPISGFSVGTTYDITRGHAGRAPQTPLMPSFSAPPVTGILPAPITQQASMTSLAQGPGTTSAITFPEEQEDPRINRGQDDAPAGGIWGFIKGVAGNPMVKSVLDKTKHSVESMITTLDPGMAPYIKSGGELDIVVTSNKEVKVAAVRDAFQEVFGLAVVVGEAGQSNIAPQPVGYAAGLKGAQERIDSLRRSGAIHEKQTAVSVENFIAELLPDKWFDIGCLVVEDPVHGIRLEAFTQATPVPLEFVQQAQSLTPQDYNLRWSGLLVTVGEVLEKSLLNVSRTDWHLAFTGMSRRQMIYSAAKAVAGMYKQRLPPRPM.

Residues 1 to 165 (MMEESGIETT…FSAPPVTGIL (165 aa)) are disordered. A compositionally biased stretch (polar residues) spans 29–45 (EAHSAATSSFSSPNVSG). Residues 59-72 (PSLPPVQPSAPPPF) are compositionally biased toward pro residues. Low complexity-rich tracts occupy residues 81–96 (VPLSGTSVPPSVSPSP) and 109–134 (PPATSASGALLSAPPSGPPISGFSVG). Ser406 bears the Phosphoserine mark.

This sequence belongs to the PRRC1 family. As to quaternary structure, interacts with PRKAR1A; resulting in PKA activation.

It localises to the golgi apparatus. The protein resides in the cytoplasm. Its function is as follows. May act as a regulator of the protein kinase A (PKA) during embryonic development. The sequence is that of Protein PRRC1 (Prrc1) from Mus musculus (Mouse).